The following is a 347-amino-acid chain: UPF0284 protein LS215_0030 (347 aa).

Belongs to the UPF0284 family.

The protein is UPF0284 protein LS215_0030 of Saccharolobus islandicus (strain L.S.2.15 / Lassen #1) (Sulfolobus islandicus).